We begin with the raw amino-acid sequence, 319 residues long: Phosphoenolpyruvate transferase (319 aa).

Residue D50 participates in 7,8-didemethyl-8-hydroxy-5-deazariboflavin binding.

This sequence belongs to the CofD family. As to quaternary structure, homodimer. The cofactor is Mg(2+).

It catalyses the reaction enolpyruvoyl-2-diphospho-5'-guanosine + 7,8-didemethyl-8-hydroxy-5-deazariboflavin = dehydro coenzyme F420-0 + GMP + H(+). It participates in cofactor biosynthesis; coenzyme F420 biosynthesis. In terms of biological role, catalyzes the transfer of the phosphoenolpyruvate moiety from enoylpyruvoyl-2-diphospho-5'-guanosine (EPPG) to 7,8-didemethyl-8-hydroxy-5-deazariboflavin (FO) with the formation of dehydro coenzyme F420-0 and GMP. The sequence is that of Phosphoenolpyruvate transferase from Streptomyces avermitilis (strain ATCC 31267 / DSM 46492 / JCM 5070 / NBRC 14893 / NCIMB 12804 / NRRL 8165 / MA-4680).